We begin with the raw amino-acid sequence, 595 residues long: Aspartate--tRNA(Asp/Asn) ligase (595 aa).

Glutamate 175 provides a ligand contact to L-aspartate. Positions 199-202 (QQYK) are aspartate. The L-aspartate site is built by arginine 221 and histidine 454. 221-223 (RDE) contacts ATP. Glutamate 488 lines the ATP pocket. Arginine 495 provides a ligand contact to L-aspartate. Position 540–543 (540–543 (GIDR)) interacts with ATP.

It belongs to the class-II aminoacyl-tRNA synthetase family. Type 1 subfamily. As to quaternary structure, homodimer.

It localises to the cytoplasm. The catalysed reaction is tRNA(Asx) + L-aspartate + ATP = L-aspartyl-tRNA(Asx) + AMP + diphosphate. Aspartyl-tRNA synthetase with relaxed tRNA specificity since it is able to aspartylate not only its cognate tRNA(Asp) but also tRNA(Asn). Reaction proceeds in two steps: L-aspartate is first activated by ATP to form Asp-AMP and then transferred to the acceptor end of tRNA(Asp/Asn). This Brucella anthropi (strain ATCC 49188 / DSM 6882 / CCUG 24695 / JCM 21032 / LMG 3331 / NBRC 15819 / NCTC 12168 / Alc 37) (Ochrobactrum anthropi) protein is Aspartate--tRNA(Asp/Asn) ligase.